An 81-amino-acid chain; its full sequence is uncharacterized protein (81 aa).

2 consecutive transmembrane segments (helical) span residues 27–47 (ASLL…LNLT) and 54–74 (IFGA…IFIM).

It is found in the cell membrane. This is an uncharacterized protein from Bacillus subtilis (strain 168).